The primary structure comprises 153 residues: Pheromone-binding protein Gp-9 (153 aa).

An N-terminal signal peptide occupies residues 1–19 (MKTFVLHIFIFALVAFASA). 3 cysteine pairs are disulfide-bonded: cysteine 37–cysteine 77, cysteine 73–cysteine 129, and cysteine 118–cysteine 138.

The protein belongs to the PBP/GOBP family. Homodimer.

It is found in the secreted. Colony queen number, a major feature of social organization, is associated with worker genotype for Gp-9. Colonies are headed by either a single reproductive queen (monogyne form) or multiple queens (polygyne form). Differences in worker Gp-9 genotypes between social forms may cause differences in workers' abilities to recognize queens and regulate their numbers. This chain is Pheromone-binding protein Gp-9, found in Solenopsis tridens (Fire ant).